Consider the following 246-residue polypeptide: Ribonuclease 3 (246 aa).

Positions A8–G137 constitute an RNase III domain. E50 is a binding site for Mg(2+). The active site involves D54. Mg(2+) is bound by residues D123 and E126. Residue E126 is part of the active site. Positions D164 to G233 constitute a DRBM domain. A disordered region spans residues S212–R246.

The protein belongs to the ribonuclease III family. In terms of assembly, homodimer. Requires Mg(2+) as cofactor.

The protein resides in the cytoplasm. The enzyme catalyses Endonucleolytic cleavage to 5'-phosphomonoester.. Digests double-stranded RNA. Involved in the processing of primary rRNA transcript to yield the immediate precursors to the large and small rRNAs (23S and 16S). Processes some mRNAs, and tRNAs when they are encoded in the rRNA operon. Processes pre-crRNA and tracrRNA of type II CRISPR loci if present in the organism. The sequence is that of Ribonuclease 3 from Desulforamulus reducens (strain ATCC BAA-1160 / DSM 100696 / MI-1) (Desulfotomaculum reducens).